The following is a 546-amino-acid chain: Glutamyl-tRNA(Gln) amidotransferase subunit A, chloroplastic/mitochondrial (546 aa).

A disordered region spans residues 21-52 (KRRRFHSSTPLFLSQPQTLASTDPPSSPPQSQ). Positions 27-43 (SSTPLFLSQPQTLASTD) are enriched in polar residues. Catalysis depends on charge relay system residues Lys-123 and Ser-198. Ser-222 (acyl-ester intermediate) is an active-site residue.

It belongs to the amidase family. GatA subfamily. In terms of assembly, subunit of the heterotrimeric GatCAB amidotransferase (AdT) complex, composed of A, B and C subunits.

It is found in the mitochondrion. Its subcellular location is the plastid. The protein localises to the chloroplast stroma. It carries out the reaction L-glutamyl-tRNA(Gln) + L-glutamine + ATP + H2O = L-glutaminyl-tRNA(Gln) + L-glutamate + ADP + phosphate + H(+). Allows the formation of correctly charged Gln-tRNA(Gln) through the transamidation of misacylated Glu-tRNA(Gln) in chloroplasts and mitochondria. The reaction takes place in the presence of glutamine and ATP through an activated gamma-phospho-Glu-tRNA(Gln). The sequence is that of Glutamyl-tRNA(Gln) amidotransferase subunit A, chloroplastic/mitochondrial from Vitis vinifera (Grape).